Here is a 172-residue protein sequence, read N- to C-terminus: MHCPFCGEADTKVIDSRLVAEGDQVRRRRECLSCRERFTTFETAELVMPRVVKQDGTRQPFDEEKLRAGIMKALEKRPVSIEEIDAALNRIKYRLRSTGEREVKSMQLGEEVMTELRQLDKVAYVRFASVYRSFQDINEFKEEIERLSQGNGDTAVDVARALVDNGTDKGKA.

The segment at Cys-3–Cys-34 is a zinc-finger region. In terms of domain architecture, ATP-cone spans Pro-49 to Glu-139.

Belongs to the NrdR family. Requires Zn(2+) as cofactor.

In terms of biological role, negatively regulates transcription of bacterial ribonucleotide reductase nrd genes and operons by binding to NrdR-boxes. The sequence is that of Transcriptional repressor NrdR from Marinobacter nauticus (strain ATCC 700491 / DSM 11845 / VT8) (Marinobacter aquaeolei).